The following is a 206-amino-acid chain: Large ribosomal subunit protein uL4 (206 aa).

Positions 46–77 are disordered; the sequence is GTRAQKDREQVKHSTKKPFKQKGTGRARAGMT. Basic residues predominate over residues 58 to 70; it reads HSTKKPFKQKGTG.

This sequence belongs to the universal ribosomal protein uL4 family. Part of the 50S ribosomal subunit.

Its function is as follows. One of the primary rRNA binding proteins, this protein initially binds near the 5'-end of the 23S rRNA. It is important during the early stages of 50S assembly. It makes multiple contacts with different domains of the 23S rRNA in the assembled 50S subunit and ribosome. Functionally, forms part of the polypeptide exit tunnel. This chain is Large ribosomal subunit protein uL4, found in Albidiferax ferrireducens (strain ATCC BAA-621 / DSM 15236 / T118) (Rhodoferax ferrireducens).